The chain runs to 460 residues: MLO-like protein 9 (460 aa).

The Extracellular segment spans residues 1–21 (MAGGGGGGGGEGPRQLDQTPT). Residues 22 to 42 (WAVSTVCGVIILISIILELII) traverse the membrane as a helical segment. At 43 to 67 (HKVGEVFERKKKKALFEALEKIKNE) the chain is on the cytoplasmic side. A helical transmembrane segment spans residues 68–88 (LMVLGFISLLLTFGQNYIASI). Over 89–158 (CVPSRYGHAM…ISLNALHQVH (70 aa)) the chain is Extracellular. Residues 159–179 (IFIFFLAVFHVIYSAITMMLG) form a helical membrane-spanning segment. The Cytoplasmic portion of the chain corresponds to 180–289 (RAKIRGWKVW…KVVVGIRPEL (110 aa)). The chain crosses the membrane as a helical span at residues 290–310 (WAFVMLFLLFDVHGWYVTAVI). Topologically, residues 311 to 315 (TMIPP) are extracellular. The helical transmembrane segment at 316–336 (LLTLAIGTKLQAIISYMALEI) threads the bilayer. The Cytoplasmic portion of the chain corresponds to 337 to 366 (QERHAVIQGMPVVNVSDQHFWFEKPDLVLH). Residues 367 to 387 (MIHFVLFQNAFEITYFFWIWY) form a helical membrane-spanning segment. Over 388 to 398 (EFGLRSCFHHH) the chain is Extracellular. Residues 399 to 419 (FGLIIIRVCLGVGVQFLCSYI) traverse the membrane as a helical segment. The Cytoplasmic portion of the chain corresponds to 420-460 (TLPLYALVTQMGSTMKRSVFDEQTSKALEQWHKKARKKNEK). The calmodulin-binding stretch occupies residues 441-460 (EQTSKALEQWHKKARKKNEK).

The protein belongs to the MLO family.

The protein localises to the membrane. May be involved in modulation of pathogen defense and leaf cell death. Activity seems to be regulated by Ca(2+)-dependent calmodulin binding and seems not to require heterotrimeric G proteins. In Arabidopsis thaliana (Mouse-ear cress), this protein is MLO-like protein 9 (MLO9).